The sequence spans 578 residues: Endonuclease GajA (578 aa).

Residues 1-341 form an ATPase domain region; that stretch reads MKFSNITIKN…RLIRVHSTEK (341 aa). 32-36 lines the ATP pocket; it reads DIGKT. The toprim domain stretch occupies residues 370 to 510; the sequence is LFAERVLLIE…LGERIYLSEI (141 aa). Positions 379, 383, 463, 464, and 513 each coordinate a divalent metal cation.

As to quaternary structure, homotetramer. Forms the core of the anti-phage defense complex. Interacts with GajB; 2 GajB dimers dock at opposite sides of the GajA complex to form a 4:4 GajA-GajB assembly (GajAB). GajAB interacts with Bacillus phage Phi3T Gad1 protein; this interaction forms a 4:4:8 GajAB-Gad1 complex and leads to GajAB inhibition. Requires Mg(2+) as cofactor. Mn(2+) serves as cofactor.

With respect to regulation, endonuclease activity inhibited by all NTPs, dNTPs, NDPs (at 0.5 mM, UDP not tested) and AMP-PNP; not inhibited by any tested NMP, dNMP or nucleoside. Inhibited by 100 mM NaCl, 100 mM KCl, 0.5 mM Co(2+) and 0.5 mM Ni(2+). Functionally, component of antiviral defense system Gabija type I, composed of GajA and GajB. Endonuclease that nicks double-stranded DNA within the sequence 5'-TNNNCGGGNNA-3' in the absence of nucleotides (NTP, dNTP and NDPs), cleaving after C-1. Has no detected ATPase activity. Expression of Gabija type I in B.subtilis (strain BEST7003) confers resistance to phages phi105, phi29, rho14, SpBeta and SBSphiC. Expression of Gabija type I in E.coli B (strain ATCC 11303) confers resistance to phage T7. It is thought that this enzyme is strongly suppressed during physiological growth (in E.coli total nucleotide concentration is over 8.7 mM in mid-log phase), but during viral replication, when nucleotides are rapidly consumed, it is de-suppressed and degrades target DNA. This is Endonuclease GajA from Bacillus cereus (strain VD045).